The sequence spans 776 residues: MASLIYRQLLTNSYTVNLSDEIQEIGSTKTQNTTINPGPFAQTGYAPVNWGPGETNDSTTIEPVLDGPYQPTSFNPPVGYWMLLSPTTAGVIVEGTNNTDRWLATILIEPNVTSQQRTYTIFGVQEQITVENTSQTQWRFVDVSKTTQNGSYSQYGPLLSTPKLYAVMKYGGRIHTYSGQTPNATTGYYSATNYDSVNMTTFCDFYIIPRSEESKCTEYINNGLPPIQNTRNIVPLALSARNVISLKAQSNEDIVVSKTSLWKEMQYNRDITIRFKFANSIVKSGGLGYKWSEISFKPANYQYTYMRDGEEVTAHTTCSVNGMNDFSFNGGSLPTDFVISRYEVIKENSYVYIDYWDDSQAFRNMVYVRSLAANLNSVTCTGGDYNFALPVGQWPYMTGGAVSLHSAGVTLSTQFTDFVSLNSLRFRFRLAVEEPSFAIMRTRVSGLYGLPAANPNNGREYYEIAGRFSLISLVPSNDNYQTPIANSVTVRQDLERQLGELREEFNALSQEIAMSQLIDLALLPLDMFSMFSGIKSTIDAAKSIATNVMKKFKRSSLASSVSILTDSLSDAASSVSRGSSIRSVGSSVSAWTDVSTQITDVSSSVSSISTQTSTISRRLRLKEMATQTEGMNFDDISAAVLKTKIDKSVQISPTTLPDIVTEASEKFIPNRAYRVINNDEVFEAGTDGRFFAYRVDTFEEIPFDVQKFADLVTDSPVISAIIDFKTLKNLNDNYGIGKQQAFNLLRSDPRVLREFINQNNPIIRNRIEQLIMQCRL.

The spike head stretch occupies residues 65-224 (LDGPYQPTSF…KCTEYINNGL (160 aa)). C203 and C216 form a disulfide bridge. The interval 248–479 (AQSNEDIVVS…LISLVPSNDN (232 aa)) is spike body and stalk (antigen domain). The DGE motif; interaction with ITGA2/ITGB1 heterodimer motif lies at 308-310 (DGE). The cysteines at positions 318 and 380 are disulfide-linked. Residues 389 to 409 (LPVGQWPYMTGGAVSLHSAGV) are hydrophobic; possible role in virus entry into host cell. A YGL motif; interaction with ITGA4 motif is present at residues 448-450 (YGL). The stretch at 484-511 (IANSVTVRQDLERQLGELREEFNALSQE) forms a coiled coil. The spike foot stretch occupies residues 510 to 776 (QEIAMSQLID…IEQLIMQCRL (267 aa)). Residues 644–646 (KID) carry the KID motif; interaction with HSPA8 motif.

It belongs to the rotavirus VP4 family. As to quaternary structure, homotrimer. VP4 adopts a dimeric appearance above the capsid surface, while forming a trimeric base anchored inside the capsid layer. Only hints of the third molecule are observed above the capsid surface. It probably performs a series of molecular rearrangements during viral entry. Prior to trypsin cleavage, it is flexible. The priming trypsin cleavage triggers its rearrangement into rigid spikes with approximate two-fold symmetry of their protruding parts. After an unknown second triggering event, cleaved VP4 may undergo another rearrangement, in which two VP5* subunits fold back on themselves and join a third subunit to form a tightly associated trimer, shaped like a folded umbrella. Interacts with VP6. Interacts with VP7. In terms of assembly, homotrimer. The trimer is coiled-coil stabilized by its C-terminus, however, its N-terminus, known as antigen domain or 'body', seems to be flexible allowing it to self-associate either as a dimer or a trimer. Post-translationally, proteolytic cleavage by trypsin results in activation of VP4 functions and greatly increases infectivity. The penetration into the host cell is dependent on trypsin treatment of VP4. It produces two peptides, VP5* and VP8* that remain associated with the virion. Cleavage of VP4 by trypsin probably occurs in vivo in the lumen of the intestine prior to infection of enterocytes. Trypsin seems to be incorporated into the three-layered viral particles but remains inactive as long as the viral outer capsid is intact and would only be activated upon the solubilization of the latter.

Its subcellular location is the virion. It localises to the host rough endoplasmic reticulum. It is found in the host cell membrane. The protein resides in the host cytoplasm. The protein localises to the host cytoskeleton. Its subcellular location is the host endoplasmic reticulum-Golgi intermediate compartment. Its function is as follows. Spike-forming protein that mediates virion attachment to the host epithelial cell receptors and plays a major role in cell penetration, determination of host range restriction and virulence. Rotavirus attachment and entry into the host cell probably involves multiple sequential contacts between the outer capsid proteins VP4 and VP7, and the cell receptors. It is subsequently lost, together with VP7, following virus entry into the host cell. Following entry into the host cell, low intracellular or intravesicular Ca(2+) concentration probably causes the calcium-stabilized VP7 trimers to dissociate from the virion. This step is probably necessary for the membrane-disrupting entry step and the release of VP4, which is locked onto the virion by VP7. During the virus exit from the host cell, VP4 seems to be required to target the newly formed virions to the host cell lipid rafts. Forms the spike 'foot' and 'body' and acts as a membrane permeabilization protein that mediates release of viral particles from endosomal compartments into the cytoplasm. During entry, the part of VP5* that protrudes from the virus folds back on itself and reorganizes from a local dimer to a trimer. This reorganization may be linked to membrane penetration by exposing VP5* hydrophobic region. In integrin-dependent strains, VP5* targets the integrin heterodimer ITGA2/ITGB1 for cell attachment. Functionally, forms the head of the spikes and mediates the recognition of specific host cell surface glycans. It is the viral hemagglutinin and an important target of neutralizing antibodies. In sialic acid-dependent strains, VP8* binds to host cell sialic acid, most probably a ganglioside, providing the initial contact. In some other strains, VP8* mediates the attachment to histo-blood group antigens (HBGAs) for viral entry. The protein is Outer capsid protein VP4 of Rotavirus A (isolate RVA/Cat/Japan/FRV64/1989/G3P5B[3]) (RV-A).